The chain runs to 2439 residues: Centrosomal protein of 290 kDa (2439 aa).

Coiled coils occupy residues 75–913 and 1271–1576; these read AEQA…VVTE and NTML…YMDT. Disordered regions lie at residues 1802-1824, 1867-1890, and 2017-2048; these read ETLN…EKEA, ELDR…KSSK, and ESRL…FQKE. Residues 2039-2048 show a composition bias toward basic and acidic residues; that stretch reads SQREHEFQKE. Residues 2046–2394 adopt a coiled-coil conformation; sequence QKENLRLSTE…KLTQELKHFD (349 aa).

As to quaternary structure, part of the tectonic-like complex (also named B9 complex).

It localises to the cytoplasm. It is found in the cytoskeleton. The protein localises to the microtubule organizing center. The protein resides in the centrosome. Its subcellular location is the centriolar satellite. It localises to the nucleus. It is found in the cilium basal body. Functionally, involved in early and late steps in cilia formation. May play a role in early ciliogenesis in the disappearance of centriolar satellites and in the transition of primary ciliar vesicles (PCVs) to capped ciliary vesicles (CCVs). In the ciliary transition zone is part of the tectonic-like complex which is required for tissue-specific ciliogenesis and may regulate ciliary membrane composition. Involved in regulation of the BBSome complex integrity and in ciliary targeting of selected BBSome cargos. Required for the correct localization of ciliary and phototransduction proteins in retinal photoreceptor cells; may play a role in ciliary transport processes. Involved in development of the nervous system and kidney. The chain is Centrosomal protein of 290 kDa (cep290) from Danio rerio (Zebrafish).